The primary structure comprises 184 residues: CKLF-like MARVEL transmembrane domain-containing protein 3 (184 aa).

Residues M1–P12 are compositionally biased toward acidic residues. The interval M1–R22 is disordered. An MARVEL domain is found at F36 to A155. The next 3 membrane-spanning stretches (helical) occupy residues A64 to A84, L96 to I116, and A131 to F151. The interval S163 to D184 is disordered. The segment covering E175 to D184 has biased composition (acidic residues).

This sequence belongs to the chemokine-like factor family.

The protein localises to the membrane. This Mus musculus (Mouse) protein is CKLF-like MARVEL transmembrane domain-containing protein 3 (Cmtm3).